The sequence spans 212 residues: Leucyl/phenylalanyl-tRNA--protein transferase (212 aa).

The protein belongs to the L/F-transferase family.

The protein localises to the cytoplasm. The catalysed reaction is N-terminal L-lysyl-[protein] + L-leucyl-tRNA(Leu) = N-terminal L-leucyl-L-lysyl-[protein] + tRNA(Leu) + H(+). The enzyme catalyses N-terminal L-arginyl-[protein] + L-leucyl-tRNA(Leu) = N-terminal L-leucyl-L-arginyl-[protein] + tRNA(Leu) + H(+). It carries out the reaction L-phenylalanyl-tRNA(Phe) + an N-terminal L-alpha-aminoacyl-[protein] = an N-terminal L-phenylalanyl-L-alpha-aminoacyl-[protein] + tRNA(Phe). In terms of biological role, functions in the N-end rule pathway of protein degradation where it conjugates Leu, Phe and, less efficiently, Met from aminoacyl-tRNAs to the N-termini of proteins containing an N-terminal arginine or lysine. The protein is Leucyl/phenylalanyl-tRNA--protein transferase of Christiangramia forsetii (strain DSM 17595 / CGMCC 1.15422 / KT0803) (Gramella forsetii).